The sequence spans 134 residues: Cytochrome b (134 aa).

3 consecutive transmembrane segments (helical) span residues 33-53 (FGSLLGVCLGVQILTGLFLAI), 77-98 (WLLRYLHANGASMFFICLYLHV), and 113-133 (WNIGILLLFAVMATAFMGYVL). Residues H83 and H97 each contribute to the heme b site.

It belongs to the cytochrome b family. In terms of assembly, the cytochrome bc1 complex contains 11 subunits: 3 respiratory subunits (MT-CYB, CYC1 and UQCRFS1), 2 core proteins (UQCRC1 and UQCRC2) and 6 low-molecular weight proteins (UQCRH/QCR6, UQCRB/QCR7, UQCRQ/QCR8, UQCR10/QCR9, UQCR11/QCR10 and a cleavage product of UQCRFS1). This cytochrome bc1 complex then forms a dimer. Heme b serves as cofactor.

It is found in the mitochondrion inner membrane. Functionally, component of the ubiquinol-cytochrome c reductase complex (complex III or cytochrome b-c1 complex) that is part of the mitochondrial respiratory chain. The b-c1 complex mediates electron transfer from ubiquinol to cytochrome c. Contributes to the generation of a proton gradient across the mitochondrial membrane that is then used for ATP synthesis. The polypeptide is Cytochrome b (MT-CYB) (Platyrrhinus helleri (Heller's broad-nosed bat)).